The primary structure comprises 293 residues: Exosome complex component RRP4 (293 aa).

Residues 1-20 form a disordered region; it reads MALEMRLPKARKPLSESLGR. The region spanning 79-159 is the S1 motif domain; it reads EVGDIVVGRI…SDGAVSLHTR (81 aa). The residue at position 124 (serine 124) is a Phosphoserine.

It belongs to the RRP4 family. In terms of assembly, component of the RNA exosome core complex (Exo-9), composed of EXOSC1, EXOSC2, EXOSC3, EXOSC4, EXOSC5, EXOSC6, EXOSC7, EXOSC8 and EXOSC9; within the complex interacts with EXOSC4 and EXOSC7. The catalytically inactive RNA exosome core complex (Exo-9) associates with the catalytic subunit EXOSC10/RRP6. Exo-9 may associate with DIS3 to form the nucleolar exosome complex, or DIS3L to form the cytoplasmic exosome complex. Exo-9 is formed by a hexameric base ring consisting of the heterodimers EXOSC4-EXOSC9, EXOSC5-EXOSC8 and EXOSC6-EXOSC7, and a cap ring consisting of EXOSC1, EXOSC2 and EXOSC3. The RNA exosome complex associates with cofactors C1D/RRP47, MPHOSPH6/MPP6 and MTREX/MTR4. Interacts with GTPBP1. Interacts with ZFP36L1 (via N-terminus).

The protein resides in the cytoplasm. The protein localises to the nucleus. It localises to the nucleolus. Functionally, non-catalytic component of the RNA exosome complex which has 3'-&gt;5' exoribonuclease activity and participates in a multitude of cellular RNA processing and degradation events. In the nucleus, the RNA exosome complex is involved in proper maturation of stable RNA species such as rRNA, snRNA and snoRNA, in the elimination of RNA processing by-products and non-coding 'pervasive' transcripts, such as antisense RNA species and promoter-upstream transcripts (PROMPTs), and of mRNAs with processing defects, thereby limiting or excluding their export to the cytoplasm. The RNA exosome may be involved in Ig class switch recombination (CSR) and/or Ig variable region somatic hypermutation (SHM) by targeting AICDA deamination activity to transcribed dsDNA substrates. In the cytoplasm, the RNA exosome complex is involved in general mRNA turnover and specifically degrades inherently unstable mRNAs containing AU-rich elements (AREs) within their 3' untranslated regions, and in RNA surveillance pathways, preventing translation of aberrant mRNAs. It seems to be involved in degradation of histone mRNA. The catalytic inactive RNA exosome core complex of 9 subunits (Exo-9) is proposed to play a pivotal role in the binding and presentation of RNA for ribonucleolysis, and to serve as a scaffold for the association with catalytic subunits and accessory proteins or complexes. EXOSC2 as peripheral part of the Exo-9 complex stabilizes the hexameric ring of RNase PH-domain subunits through contacts with EXOSC4 and EXOSC7. In Mus musculus (Mouse), this protein is Exosome complex component RRP4 (Exosc2).